The sequence spans 968 residues: RNA polymerase-associated protein RapA (968 aa).

In terms of domain architecture, Helicase ATP-binding spans 164 to 334 (DVGRRHAPRV…FARLRLLDPN (171 aa)). 177–184 (DEVGLGKT) lines the ATP pocket. The DEAH box signature appears at 280–283 (DEAH). One can recognise a Helicase C-terminal domain in the interval 490–685 (RVEWLMGYLT…ALKAQLEQGR (196 aa)).

The protein belongs to the SNF2/RAD54 helicase family. RapA subfamily. In terms of assembly, interacts with the RNAP. Has a higher affinity for the core RNAP than for the holoenzyme. Its ATPase activity is stimulated by binding to RNAP.

In terms of biological role, transcription regulator that activates transcription by stimulating RNA polymerase (RNAP) recycling in case of stress conditions such as supercoiled DNA or high salt concentrations. Probably acts by releasing the RNAP, when it is trapped or immobilized on tightly supercoiled DNA. Does not activate transcription on linear DNA. Probably not involved in DNA repair. The protein is RNA polymerase-associated protein RapA of Salmonella newport (strain SL254).